The sequence spans 480 residues: Lysostaphin (480 aa).

Residues 1–23 (MKKTKNNYYTTPLAIGLSTFALA) form the signal peptide. Residues 24–234 (SIVYGGIQNE…ALVQNRTALR (211 aa)) constitute a propeptide that is removed on maturation. 13 tandem repeats follow at residues 49 to 61 (AEVE…VENT), 62 to 74 (AEVE…VENT), 75 to 87 (AEVE…VENT), 88 to 100 (AEVE…VENT), 101 to 113 (AEVE…VENT), 114 to 126 (AEVE…VENT), 127 to 139 (AEVE…VENT), 140 to 152 (AEVE…VENT), 153 to 165 (AEVE…VENT), 166 to 178 (AEVE…VENT), 179 to 191 (AEVE…VENT), 192 to 204 (AEVE…VENT), and 205 to 217 (AEVE…VENT). The interval 49–230 (AEVETSKPPV…ETSKALVQNR (182 aa)) is 14 X 13 AA tandem repeats of A-E-V-E-T-S-K-[AP]-P-V-E-N-T. Positions 51–219 (VETSKPPVEN…SKAPVENTAE (169 aa)) are disordered. A 14; approximate repeat occupies 218-230 (AEVETSKALVQNR). Positions 266 and 270 each coordinate Zn(2+). Histidine 347 is an active-site residue. Residue histidine 349 participates in Zn(2+) binding. The region spanning 400 to 468 (SESASFTPNT…YLPVRTWNKS (69 aa)) is the SH3b domain.

Belongs to the peptidase M23B family. Monomer. It depends on Zn(2+) as a cofactor.

It is found in the secreted. It catalyses the reaction Hydrolysis of the -Gly-|-Gly- bond in the pentaglycine inter-peptide link joining staphylococcal cell wall peptidoglycans.. Functionally, lyses staphylococcal cells by hydrolyzing the polyglycine interpeptide bridges of the peptidoglycan. This Staphylococcus staphylolyticus protein is Lysostaphin (lss).